Here is a 187-residue protein sequence, read N- to C-terminus: UPF0301 protein YqgE (187 aa).

Belongs to the UPF0301 (AlgH) family.

In Escherichia coli O7:K1 (strain IAI39 / ExPEC), this protein is UPF0301 protein YqgE.